Here is a 713-residue protein sequence, read N- to C-terminus: Methionine--tRNA ligase (713 aa).

Residues 31 to 41 (PYANGSIHLGH) carry the 'HIGH' region motif. Cys-162, Cys-165, Cys-175, and Cys-178 together coordinate Zn(2+). The 'KMSKS' region signature appears at 348-352 (KMSKS). Position 351 (Lys-351) interacts with ATP. Positions 609–713 (DFAKIDLRIV…DGAKAGMRVK (105 aa)) constitute a tRNA-binding domain.

This sequence belongs to the class-I aminoacyl-tRNA synthetase family. MetG type 1 subfamily. Homodimer. Zn(2+) is required as a cofactor.

The protein resides in the cytoplasm. The catalysed reaction is tRNA(Met) + L-methionine + ATP = L-methionyl-tRNA(Met) + AMP + diphosphate. In terms of biological role, is required not only for elongation of protein synthesis but also for the initiation of all mRNA translation through initiator tRNA(fMet) aminoacylation. The sequence is that of Methionine--tRNA ligase from Colwellia psychrerythraea (strain 34H / ATCC BAA-681) (Vibrio psychroerythus).